Consider the following 40-residue polypeptide: MPCPCGSGCKCASQATKGSCNCGSDCKCGGDKKSACGCSK.

The protein belongs to the metallothionein superfamily. Type 5 family.

Its function is as follows. This protein binds cations of several transition elements. It is thought to be involved in detoxification processes. The sequence is that of Metallothionein-1 (MtnA) from Drosophila ananassae (Fruit fly).